A 307-amino-acid polypeptide reads, in one-letter code: Agmatinase (307 aa).

Mn(2+) is bound by residues His-128, Asp-151, His-153, Asp-155, Asp-232, and Asp-234.

It belongs to the arginase family. Agmatinase subfamily. Requires Mn(2+) as cofactor.

It carries out the reaction agmatine + H2O = urea + putrescine. It participates in amine and polyamine biosynthesis; putrescine biosynthesis via agmatine pathway; putrescine from agmatine: step 1/1. Its function is as follows. Catalyzes the formation of putrescine from agmatine. The chain is Agmatinase from Neisseria gonorrhoeae (strain ATCC 700825 / FA 1090).